The sequence spans 220 residues: Protein GrpE (220 aa).

It belongs to the GrpE family. In terms of assembly, homodimer.

It is found in the cytoplasm. Functionally, participates actively in the response to hyperosmotic and heat shock by preventing the aggregation of stress-denatured proteins, in association with DnaK and GrpE. It is the nucleotide exchange factor for DnaK and may function as a thermosensor. Unfolded proteins bind initially to DnaJ; upon interaction with the DnaJ-bound protein, DnaK hydrolyzes its bound ATP, resulting in the formation of a stable complex. GrpE releases ADP from DnaK; ATP binding to DnaK triggers the release of the substrate protein, thus completing the reaction cycle. Several rounds of ATP-dependent interactions between DnaJ, DnaK and GrpE are required for fully efficient folding. The polypeptide is Protein GrpE (Bartonella quintana (strain Toulouse) (Rochalimaea quintana)).